The following is a 446-amino-acid chain: Ribosomal protein uS12 methylthiotransferase RimO (446 aa).

One can recognise an MTTase N-terminal domain in the interval 10–122; that stretch reads KTLHMVSLGC…IDELVNEKRS (113 aa). 6 residues coordinate [4Fe-4S] cluster: Cys19, Cys53, Cys85, Cys154, Cys158, and Cys161. The Radical SAM core domain occupies 140 to 369; it reads TGSSYHAYVK…GEIISQTTQE (230 aa). The 75-residue stretch at 372-446 folds into the TRAM domain; sequence ESEVGKTFEV…GDKLLATVIK (75 aa).

Belongs to the methylthiotransferase family. RimO subfamily. It depends on [4Fe-4S] cluster as a cofactor.

The protein resides in the cytoplasm. The enzyme catalyses L-aspartate(89)-[ribosomal protein uS12]-hydrogen + (sulfur carrier)-SH + AH2 + 2 S-adenosyl-L-methionine = 3-methylsulfanyl-L-aspartate(89)-[ribosomal protein uS12]-hydrogen + (sulfur carrier)-H + 5'-deoxyadenosine + L-methionine + A + S-adenosyl-L-homocysteine + 2 H(+). In terms of biological role, catalyzes the methylthiolation of an aspartic acid residue of ribosomal protein uS12. The sequence is that of Ribosomal protein uS12 methylthiotransferase RimO from Aliarcobacter butzleri (strain RM4018) (Arcobacter butzleri).